The following is a 101-amino-acid chain: NAD(P)H-quinone oxidoreductase subunit 4L, chloroplastic (101 aa).

Helical transmembrane passes span 2–22 (MLEHELVLSAYLFSIGIYGLI), 32–52 (MCLELILNAVNMNLVTFSDLF), and 61–81 (IFSIFVIAIAAAEAAIGPAIV).

It belongs to the complex I subunit 4L family. In terms of assembly, NDH is composed of at least 16 different subunits, 5 of which are encoded in the nucleus.

Its subcellular location is the plastid. It is found in the chloroplast thylakoid membrane. The enzyme catalyses a plastoquinone + NADH + (n+1) H(+)(in) = a plastoquinol + NAD(+) + n H(+)(out). The catalysed reaction is a plastoquinone + NADPH + (n+1) H(+)(in) = a plastoquinol + NADP(+) + n H(+)(out). Its function is as follows. NDH shuttles electrons from NAD(P)H:plastoquinone, via FMN and iron-sulfur (Fe-S) centers, to quinones in the photosynthetic chain and possibly in a chloroplast respiratory chain. The immediate electron acceptor for the enzyme in this species is believed to be plastoquinone. Couples the redox reaction to proton translocation, and thus conserves the redox energy in a proton gradient. The chain is NAD(P)H-quinone oxidoreductase subunit 4L, chloroplastic from Ceratophyllum demersum (Rigid hornwort).